Consider the following 391-residue polypeptide: Phosphoglycerate kinase (391 aa).

Substrate-binding positions include 21–23 (DLN), R36, 59–62 (HLGR), R113, and R146. ATP contacts are provided by residues K197, E319, and 345 to 348 (GGDT).

This sequence belongs to the phosphoglycerate kinase family. In terms of assembly, monomer.

Its subcellular location is the cytoplasm. It carries out the reaction (2R)-3-phosphoglycerate + ATP = (2R)-3-phospho-glyceroyl phosphate + ADP. The protein operates within carbohydrate degradation; glycolysis; pyruvate from D-glyceraldehyde 3-phosphate: step 2/5. The chain is Phosphoglycerate kinase from Shewanella frigidimarina (strain NCIMB 400).